A 729-amino-acid chain; its full sequence is Rho GTPase-activating protein 28 (729 aa).

Residues 1 to 78 (MEVEDSGGVV…ASVDSSASME (78 aa)) form a disordered region. The segment covering 37 to 49 (LSRKSIPRCRRIN) has biased composition (basic residues). The segment covering 63 to 76 (SRSNSQASVDSSAS) has biased composition (low complexity). The residue at position 70 (serine 70) is a Phosphoserine. A Phosphothreonine modification is found at threonine 164. A disordered region spans residues 180-234 (FGVSESPPSDSCEHATQLDGTKEEKDLPGVTKTSRPLPDDASLSSTTLSNGAQDE). Residues 221 to 231 (SLSSTTLSNGA) are compositionally biased toward polar residues. Residues 384–581 (VPLTVLLDND…LMLKYQKILW (198 aa)) form the Rho-GAP domain.

GTPase activator for the Rho-type GTPases by converting them to an inactive GDP-bound state. The chain is Rho GTPase-activating protein 28 (Arhgap28) from Mus musculus (Mouse).